We begin with the raw amino-acid sequence, 155 residues long: 6,7-dimethyl-8-ribityllumazine synthase (155 aa).

5-amino-6-(D-ribitylamino)uracil is bound by residues Phe-24, 58 to 60 (AFE), and 82 to 84 (VII). 87–88 (ST) is a binding site for (2S)-2-hydroxy-3-oxobutyl phosphate. His-90 functions as the Proton donor in the catalytic mechanism. Phe-115 lines the 5-amino-6-(D-ribitylamino)uracil pocket. (2S)-2-hydroxy-3-oxobutyl phosphate is bound at residue Arg-129.

This sequence belongs to the DMRL synthase family.

The enzyme catalyses (2S)-2-hydroxy-3-oxobutyl phosphate + 5-amino-6-(D-ribitylamino)uracil = 6,7-dimethyl-8-(1-D-ribityl)lumazine + phosphate + 2 H2O + H(+). It functions in the pathway cofactor biosynthesis; riboflavin biosynthesis; riboflavin from 2-hydroxy-3-oxobutyl phosphate and 5-amino-6-(D-ribitylamino)uracil: step 1/2. In terms of biological role, catalyzes the formation of 6,7-dimethyl-8-ribityllumazine by condensation of 5-amino-6-(D-ribitylamino)uracil with 3,4-dihydroxy-2-butanone 4-phosphate. This is the penultimate step in the biosynthesis of riboflavin. This Chlorobaculum tepidum (strain ATCC 49652 / DSM 12025 / NBRC 103806 / TLS) (Chlorobium tepidum) protein is 6,7-dimethyl-8-ribityllumazine synthase.